Here is an 832-residue protein sequence, read N- to C-terminus: Beta-galactosidase (832 aa).

The N-terminal stretch at 1–25 is a signal peptide; the sequence is MALKLVLMLMVALLAAVWSPPAVTA. E183 functions as the Proton donor in the catalytic mechanism. E252 acts as the Nucleophile in catalysis. Residues 741 to 832 enclose the SUEL-type lectin domain; that stretch reads AYGRPKVHLS…KKLAVEAICE (92 aa).

This sequence belongs to the glycosyl hydrolase 35 family.

The protein resides in the secreted. Its subcellular location is the extracellular space. The protein localises to the apoplast. It catalyses the reaction Hydrolysis of terminal non-reducing beta-D-galactose residues in beta-D-galactosides.. This chain is Beta-galactosidase, found in Asparagus officinalis (Garden asparagus).